The chain runs to 183 residues: UPF0397 protein EAT1b_2102 (183 aa).

The next 5 helical transmembrane spans lie at 9 to 29, 42 to 62, 74 to 94, 117 to 137, and 147 to 167; these read IVATGIGAAVFIILSRFAAIP, AFLAFMAVLFGPITAGLIGLI, SPWWSWVIVSGFVGLGIGLIA, AVVQAIGWIVIAPVLDILIYA, and GAVAATSNILTVGVIGTLLLV.

The protein belongs to the UPF0397 family.

Its subcellular location is the cell membrane. The protein is UPF0397 protein EAT1b_2102 of Exiguobacterium sp. (strain ATCC BAA-1283 / AT1b).